A 341-amino-acid polypeptide reads, in one-letter code: S-adenosylmethionine:tRNA ribosyltransferase-isomerase (341 aa).

This sequence belongs to the QueA family. In terms of assembly, monomer.

It is found in the cytoplasm. The catalysed reaction is 7-aminomethyl-7-carbaguanosine(34) in tRNA + S-adenosyl-L-methionine = epoxyqueuosine(34) in tRNA + adenine + L-methionine + 2 H(+). It participates in tRNA modification; tRNA-queuosine biosynthesis. In terms of biological role, transfers and isomerizes the ribose moiety from AdoMet to the 7-aminomethyl group of 7-deazaguanine (preQ1-tRNA) to give epoxyqueuosine (oQ-tRNA). This is S-adenosylmethionine:tRNA ribosyltransferase-isomerase from Citrifermentans bemidjiense (strain ATCC BAA-1014 / DSM 16622 / JCM 12645 / Bem) (Geobacter bemidjiensis).